The following is a 60-amino-acid chain: Large ribosomal subunit protein bL32 (60 aa).

This sequence belongs to the bacterial ribosomal protein bL32 family.

This is Large ribosomal subunit protein bL32 from Paramagnetospirillum magneticum (strain ATCC 700264 / AMB-1) (Magnetospirillum magneticum).